The primary structure comprises 429 residues: Glutamyl-tRNA reductase (429 aa).

Residues 49–52 (TCNR), serine 107, 112–114 (EPQ), and glutamine 118 each bind substrate. Cysteine 50 serves as the catalytic Nucleophile. Position 187-192 (187-192 (GAGKTI)) interacts with NADP(+).

It belongs to the glutamyl-tRNA reductase family. Homodimer.

It catalyses the reaction (S)-4-amino-5-oxopentanoate + tRNA(Glu) + NADP(+) = L-glutamyl-tRNA(Glu) + NADPH + H(+). It functions in the pathway porphyrin-containing compound metabolism; protoporphyrin-IX biosynthesis; 5-aminolevulinate from L-glutamyl-tRNA(Glu): step 1/2. Catalyzes the NADPH-dependent reduction of glutamyl-tRNA(Glu) to glutamate 1-semialdehyde (GSA). The protein is Glutamyl-tRNA reductase of Marinobacter nauticus (strain ATCC 700491 / DSM 11845 / VT8) (Marinobacter aquaeolei).